The sequence spans 315 residues: Acetyl-coenzyme A carboxylase carboxyl transferase subunit alpha (315 aa).

In terms of domain architecture, CoA carboxyltransferase C-terminal spans 36–289 (LGKKRLELME…RKAVAAELKV (254 aa)).

This sequence belongs to the AccA family. Acetyl-CoA carboxylase is a heterohexamer composed of biotin carboxyl carrier protein (AccB), biotin carboxylase (AccC) and two subunits each of ACCase subunit alpha (AccA) and ACCase subunit beta (AccD).

It localises to the cytoplasm. The enzyme catalyses N(6)-carboxybiotinyl-L-lysyl-[protein] + acetyl-CoA = N(6)-biotinyl-L-lysyl-[protein] + malonyl-CoA. The protein operates within lipid metabolism; malonyl-CoA biosynthesis; malonyl-CoA from acetyl-CoA: step 1/1. Component of the acetyl coenzyme A carboxylase (ACC) complex. First, biotin carboxylase catalyzes the carboxylation of biotin on its carrier protein (BCCP) and then the CO(2) group is transferred by the carboxyltransferase to acetyl-CoA to form malonyl-CoA. This chain is Acetyl-coenzyme A carboxylase carboxyl transferase subunit alpha, found in Francisella philomiragia subsp. philomiragia (strain ATCC 25017 / CCUG 19701 / FSC 153 / O#319-036).